The chain runs to 107 residues: Probable insulin-like peptide beta-type 3 (107 aa).

The first 19 residues, 1-19, serve as a signal peptide directing secretion; it reads MKLSVVLALFIIFQLGAAS. Positions 20–55 are excised as a propeptide; the sequence is LMRNWMFDFEKELEHDYDDSEIGFHNIHSLMARSRR. Intrachain disulfides connect Cys-62–Cys-90, Cys-74–Cys-103, Cys-78–Cys-104, and Cys-89–Cys-94.

Belongs to the insulin family.

It localises to the secreted. The sequence is that of Probable insulin-like peptide beta-type 3 (ins-3) from Caenorhabditis elegans.